A 37-amino-acid polypeptide reads, in one-letter code: Esculentin-2SE (37 aa).

A disulfide bridge links Cys31 with Cys37.

Expressed by the skin glands.

The protein localises to the secreted. Functionally, mast cell degranulating peptide. Causes histamine release from rat peritoneal mast cells in vitro. Has antibacterial activity against the Gram-negative bacterium E.coli K12 and Gram-positive bacterium M.luteus NCT C2665. This chain is Esculentin-2SE, found in Lithobates sevosus (Dusky gopher frog).